The following is a 2185-amino-acid chain: Genome polyprotein (2185 aa).

Gly-2 carries N-myristoyl glycine; by host lipidation. The Cytoplasmic segment spans residues 2–1495 (GAQVSTQKTG…HVNRAFICLQ (1494 aa)). Residues 566 to 582 (FFQGPPGEVVERAIARV) are amphipathic alpha-helix. Residues His-872 and Asp-890 each act as for protease 2A activity in the active site. Residues Cys-907 and Cys-909 each coordinate Zn(2+). Cys-961 (for protease 2A activity) is an active-site residue. Positions 967 and 969 each coordinate Zn(2+). The tract at residues 1101-1173 (NSGWLKKFTE…EQSAPSQSDQ (73 aa)) is membrane-binding. Residues 1101 to 1239 (NSGWLKKFTE…SPGAGKSVAT (139 aa)) are oligomerization. The segment at 1122 to 1126 (AIKIQ) is RNA-binding. In terms of domain architecture, SF3 helicase spans 1205–1361 (EKKMSNYIQF…SMYSQNGKIN (157 aa)). Zn(2+)-binding residues include Cys-1369, Cys-1381, and Cys-1386. The C4-type; degenerate zinc finger occupies 1369–1386 (CDEECCPVNFKKCCPLVC). Residues 1413–1420 (EYNHRHSV) are RNA-binding. Residues 1424 to 1429 (LEALFQ) are oligomerization. Residues 1496–1511 (ALTTFVSVAGIIYIIY) lie within the membrane without spanning it. At 1512–2185 (KLFAGFQGAY…TLRRKWLDSF (674 aa)) the chain is on the cytoplasmic side. Tyr-1521 bears the O-(5'-phospho-RNA)-tyrosine mark. Residues 1541-1719 (GPAFEFAVAM…FSAALLRHYF (179 aa)) form the Peptidase C3 domain. Residues His-1580, Glu-1611, and Cys-1687 each act as for protease 3C activity in the active site. Residues 1950–2066 (GHLIAFDYSG…SYPWPIDASL (117 aa)) enclose the RdRp catalytic domain. Mg(2+)-binding residues include Asp-1956 and Asp-2052.

It belongs to the picornaviruses polyprotein family. Interacts with capsid protein VP1 and capsid protein VP3 to form heterotrimeric protomers. In terms of assembly, interacts with capsid protein VP0, and capsid protein VP3 to form heterotrimeric protomers. Five protomers subsequently associate to form pentamers which serve as building blocks for the capsid. Interacts with capsid protein VP2, capsid protein VP3 and capsid protein VP4 following cleavage of capsid protein VP0. As to quaternary structure, interacts with capsid protein VP1 and capsid protein VP3 in the mature capsid. Interacts with capsid protein VP0 and capsid protein VP1 to form heterotrimeric protomers. Five protomers subsequently associate to form pentamers which serve as building blocks for the capsid. Interacts with capsid protein VP4 in the mature capsid. Interacts with protein 2C; this interaction may be important for virion morphogenesis. In terms of assembly, interacts with capsid protein VP1 and capsid protein VP3. As to quaternary structure, homodimer. Homohexamer; forms a hexameric ring structure with 6-fold symmetry characteristic of AAA+ ATPases. Interacts (via N-terminus) with host RTN3 (via reticulon domain); this interaction is important for viral replication. Interacts with capsid protein VP3; this interaction may be important for virion morphogenesis. In terms of assembly, interacts with protein 3CD. As to quaternary structure, homodimer. Interacts with host GBF1. Interacts (via GOLD domain) with host ACBD3 (via GOLD domain); this interaction allows the formation of a viral protein 3A/ACBD3 heterotetramer with a 2:2 stoichiometry, which will stimulate the recruitment of host PI4KB in order to synthesize PI4P at the viral RNA replication sites. Interacts with RNA-directed RNA polymerase. In terms of assembly, interacts with protein 3AB and with RNA-directed RNA polymerase. As to quaternary structure, interacts with Viral protein genome-linked and with protein 3CD. Mg(2+) serves as cofactor. In terms of processing, specific enzymatic cleavages in vivo by the viral proteases yield processing intermediates and the mature proteins. Myristoylation is required for the formation of pentamers during virus assembly. Further assembly of 12 pentamers and a molecule of genomic RNA generates the provirion. Post-translationally, during virion maturation, immature virions are rendered infectious following cleavage of VP0 into VP4 and VP2. This maturation seems to be an autocatalytic event triggered by the presence of RNA in the capsid and it is followed by a conformational change infectious virion. In terms of processing, myristoylation is required during RNA encapsidation and formation of the mature virus particle. VPg is uridylylated by the polymerase into VPg-pUpU. This acts as a nucleotide-peptide primer for the genomic RNA replication.

The protein localises to the virion. It is found in the host cytoplasm. It localises to the host cytoplasmic vesicle membrane. Its subcellular location is the host nucleus. The enzyme catalyses a ribonucleoside 5'-triphosphate + H2O = a ribonucleoside 5'-diphosphate + phosphate + H(+). It catalyses the reaction Selective cleavage of Tyr-|-Gly bond in the picornavirus polyprotein.. It carries out the reaction RNA(n) + a ribonucleoside 5'-triphosphate = RNA(n+1) + diphosphate. The catalysed reaction is Selective cleavage of Gln-|-Gly bond in the poliovirus polyprotein. In other picornavirus reactions Glu may be substituted for Gln, and Ser or Thr for Gly.. Replication or transcription is subject to high level of random mutations by the nucleotide analog ribavirin. In terms of biological role, forms an icosahedral capsid of pseudo T=3 symmetry with capsid proteins VP2 and VP3. The capsid is 300 Angstroms in diameter, composed of 60 copies of each capsid protein and enclosing the viral positive strand RNA genome. Capsid protein VP1 mainly forms the vertices of the capsid. Capsid protein VP1 interacts with host cell receptor to provide virion attachment to target host cells. This attachment induces virion internalization. Tyrosine kinases are probably involved in the entry process. After binding to its receptor, the capsid undergoes conformational changes. Capsid protein VP1 N-terminus (that contains an amphipathic alpha-helix) and capsid protein VP4 are externalized. Together, they shape a pore in the host membrane through which viral genome is translocated to host cell cytoplasm. Its function is as follows. Forms an icosahedral capsid of pseudo T=3 symmetry with capsid proteins VP2 and VP3. The capsid is 300 Angstroms in diameter, composed of 60 copies of each capsid protein and enclosing the viral positive strand RNA genome. Lies on the inner surface of the capsid shell. After binding to the host receptor, the capsid undergoes conformational changes. Capsid protein VP4 is released, Capsid protein VP1 N-terminus is externalized, and together, they shape a pore in the host membrane through which the viral genome is translocated into the host cell cytoplasm. Functionally, component of immature procapsids, which is cleaved into capsid proteins VP4 and VP2 after maturation. Allows the capsid to remain inactive before the maturation step. In terms of biological role, cysteine protease that cleaves viral polyprotein and specific host proteins. It is responsible for the autocatalytic cleavage between the P1 and P2 regions, which is the first cleavage occurring in the polyprotein. Also cleaves the host translation initiation factor EIF4G1, in order to shut down the capped cellular mRNA translation. Inhibits the host nucleus-cytoplasm protein and RNA trafficking by cleaving host members of the nuclear pores. Counteracts stress granule formation probably by antagonizing its assembly or promoting its dissassembly. Its function is as follows. Plays an essential role in the virus replication cycle by acting as a viroporin. Creates a pore in the host endoplasmic reticulum and as a consequence releases Ca2+ in the cytoplasm of infected cell. In turn, high levels of cytoplasmic calcium may trigger membrane trafficking and transport of viral ER-associated proteins to viroplasms, sites of viral genome replication. Induces and associates with structural rearrangements of intracellular membranes. Displays RNA-binding, nucleotide binding and NTPase activities. May play a role in virion morphogenesis and viral RNA encapsidation by interacting with the capsid protein VP3. Functionally, localizes the viral replication complex to the surface of membranous vesicles. Together with protein 3CD binds the Cis-Active RNA Element (CRE) which is involved in RNA synthesis initiation. Acts as a cofactor to stimulate the activity of 3D polymerase, maybe through a nucleid acid chaperone activity. In terms of biological role, localizes the viral replication complex to the surface of membranous vesicles. It inhibits host cell endoplasmic reticulum-to-Golgi apparatus transport and causes the disassembly of the Golgi complex, possibly through GBF1 interaction. This would result in depletion of MHC, trail receptors and IFN receptors at the host cell surface. Plays an essential role in viral RNA replication by recruiting ACBD3 and PI4KB at the viral replication sites, thereby allowing the formation of the rearranged membranous structures where viral replication takes place. Its function is as follows. Acts as a primer for viral RNA replication and remains covalently bound to viral genomic RNA. VPg is uridylylated prior to priming replication into VPg-pUpU. The oriI viral genomic sequence may act as a template for this. The VPg-pUpU is then used as primer on the genomic RNA poly(A) by the RNA-dependent RNA polymerase to replicate the viral genome. During genome replication, the VPg-RNA linkage is removed by the host TDP2, thereby accelerating replication. During the late stage of the replication cycle, host TDP2 is excluded from sites of viral RNA synthesis and encapsidation, allowing for the generation of progeny virions. Involved in the viral replication complex and viral polypeptide maturation. It exhibits protease activity with a specificity and catalytic efficiency that is different from protease 3C. Protein 3CD lacks polymerase activity. Protein 3CD binds to the 5'UTR of the viral genome. Functionally, major viral protease that mediates proteolytic processing of the polyprotein. Cleaves host EIF5B, contributing to host translation shutoff. Also cleaves host PABPC1, contributing to host translation shutoff. Cleaves host NLRP1, triggers host N-glycine-mediated degradation of the autoinhibitory NLRP1 N-terminal fragment. In terms of biological role, replicates the viral genomic RNA on the surface of intracellular membranes. May form linear arrays of subunits that propagate along a strong head-to-tail interaction called interface-I. Covalently attaches UMP to a tyrosine of VPg, which is used to prime RNA synthesis. The positive stranded RNA genome is first replicated at virus induced membranous vesicles, creating a dsRNA genomic replication form. This dsRNA is then used as template to synthesize positive stranded RNA genomes. ss(+)RNA genomes are either translated, replicated or encapsidated. This Swine vesicular disease virus (strain H/3 '76) (SVDV) protein is Genome polyprotein.